Consider the following 205-residue polypeptide: MSDSLNRPPRLILASSSPYRRELLQRLRVPFDVAVPAIDETPLAGETPEVTALRLAQAKARAVAGGLGAGVAALVIGSDQVATYDGLQIGKPGTHANALAQLQAMRGREVQFHSALCLFDSRSGTVQAVDVVTRVQFRDLPDAALEAYLLAETPYDVAGSAKSEGLGIALLEAIHSDDPTALVGLPLIALSRMLLAVGYPLLGAQ.

Residue aspartate 79 is the Proton acceptor of the active site.

The protein belongs to the Maf family. YceF subfamily. The cofactor is a divalent metal cation.

It localises to the cytoplasm. The enzyme catalyses N(7)-methyl-GTP + H2O = N(7)-methyl-GMP + diphosphate + H(+). In terms of biological role, nucleoside triphosphate pyrophosphatase that hydrolyzes 7-methyl-GTP (m(7)GTP). May have a dual role in cell division arrest and in preventing the incorporation of modified nucleotides into cellular nucleic acids. The chain is 7-methyl-GTP pyrophosphatase from Paraburkholderia xenovorans (strain LB400).